Reading from the N-terminus, the 132-residue chain is SH2 domain-containing protein 1B (132 aa).

Residues 5 to 101 (YYHGRLTKQD…GMVVHLLKPI (97 aa)) form the SH2 domain. Tyrosine 127 is subject to Phosphotyrosine.

In terms of assembly, binds to the phosphorylated receptors CD84, SLAMF1, LY9 and CD244. Does not bind to non-phosphorylated SLAMF1. Interacts with SLAMF7 (via ITSM phosphorylated on 'Tyr-304'). Interacts with Src kinases HCK, LYN, FYN, FGR and LCK (via kinase domains). Interacts (phosphorylated at Tyr-127) with PLCG1.

In terms of biological role, cytoplasmic adapter regulating receptors of the signaling lymphocytic activation molecule (SLAM) family such as CD84, SLAMF1, LY9 and CD244. In SLAM signaling seems to cooperate with SH2D1A/SAP. Plays a role in regulation of effector functions of natural killer (NK) cells by controlling signal transduction through CD244/2B4 without effecting its tyrosine phosphorylation; downstream signaling involves PLCG1 and ERK activation. Activation of SLAMF7-mediated NK cell function does not effect receptor tyrosine phosphorylation but distal signaling. In the context of NK cell-mediated cytotoxicity does not enhance conjugate formation with target cells but stimulates polarization of the microtubule-organizing center and cytotoxic granules toward the NK cell synapse. Negatively regulates CD40-induced cytokine production in dendritic cells downstream of SLAM family receptors probably by inducing activation of the PI3K pathway to inhibit p38 MAPK and JNK activation. The protein is SH2 domain-containing protein 1B (SH2D1B) of Homo sapiens (Human).